The sequence spans 86 residues: Small ribosomal subunit protein bS20 (86 aa).

The protein belongs to the bacterial ribosomal protein bS20 family.

In terms of biological role, binds directly to 16S ribosomal RNA. The chain is Small ribosomal subunit protein bS20 from Novosphingobium aromaticivorans (strain ATCC 700278 / DSM 12444 / CCUG 56034 / CIP 105152 / NBRC 16084 / F199).